The sequence spans 351 residues: Photosystem II D2 protein (351 aa).

The chain crosses the membrane as a helical span at residues 39-59 (CAFLALGGWLTGTTFVTSWYT). H116 lines the chlorophyll a pocket. A helical membrane pass occupies residues 123 to 139 (GFMLRQFEIARLVGIRP). Pheophytin a is bound by residues Q128 and N141. A helical transmembrane segment spans residues 151–164 (VFVSVFLMYPLGQS). Position 196 (H196) interacts with chlorophyll a. A helical transmembrane segment spans residues 206–226 (GALLCAIHGATVENTLFEDGE). A plastoquinone contacts are provided by H213 and F260. A Fe cation-binding site is contributed by H213. H267 contributes to the Fe cation binding site. The helical transmembrane segment at 277–293 (GLWMSAVGIVGLALNLR) threads the bilayer.

The protein belongs to the reaction center PufL/M/PsbA/D family. PSII is composed of 1 copy each of membrane proteins PsbA, PsbB, PsbC, PsbD, PsbE, PsbF, PsbH, PsbI, PsbJ, PsbK, PsbL, PsbM, PsbT, PsbX, PsbY, PsbZ, Psb30/Ycf12, peripheral proteins PsbO, CyanoQ (PsbQ), PsbU, PsbV and a large number of cofactors. It forms dimeric complexes. The cofactor is The D1/D2 heterodimer binds P680, chlorophylls that are the primary electron donor of PSII, and subsequent electron acceptors. It shares a non-heme iron and each subunit binds pheophytin, quinone, additional chlorophylls, carotenoids and lipids. There is also a Cl(-1) ion associated with D1 and D2, which is required for oxygen evolution. The PSII complex binds additional chlorophylls, carotenoids and specific lipids..

It localises to the cellular thylakoid membrane. It catalyses the reaction 2 a plastoquinone + 4 hnu + 2 H2O = 2 a plastoquinol + O2. Its function is as follows. Photosystem II (PSII) is a light-driven water:plastoquinone oxidoreductase that uses light energy to abstract electrons from H(2)O, generating O(2) and a proton gradient subsequently used for ATP formation. It consists of a core antenna complex that captures photons, and an electron transfer chain that converts photonic excitation into a charge separation. The D1/D2 (PsbA/PsbD) reaction center heterodimer binds P680, the primary electron donor of PSII as well as several subsequent electron acceptors. D2 is needed for assembly of a stable PSII complex. The sequence is that of Photosystem II D2 protein from Trichormus variabilis (strain ATCC 29413 / PCC 7937) (Anabaena variabilis).